We begin with the raw amino-acid sequence, 110 residues long: MRFMTLLFLTALAGALVCAYDPEAASAPGSGNPCHEASAAQKENAGEDPGLARQAPKPRKQRSSLLEKGLDGAKKAVGGLGKLGKDAVEDLESVGKGAVHDVKDVLDSVL.

Positions M1–A19 are cleaved as a signal peptide. Residues A24 to L70 are disordered. O-linked (Xyl...) (chondroitin sulfate) serine glycosylation is found at S30 and S38. Residues G50–R62 constitute a propeptide that is removed on maturation. The chain crosses the membrane as a helical span at residues S64–S108. Residue E67 participates in Zn(2+) binding. N6-acetyllysine is present on K68. D71, D86, D90, H100, and D104 together coordinate Zn(2+). A propeptide is located at residue L110.

Homohexamer. Mn(2+) serves as cofactor. The cofactor is Zn(2+). Detected in urine (at protein level). Constitutively expressed in eccrine sweat gland cells (at protein level). Secreted into the sweat at a concentration of 1-10 micrograms/ml.

Its subcellular location is the secreted. The protein localises to the membrane. Functionally, found in sweat, has an antimicrobial activity during early bacterial colonization. The secreted peptide assembles into homohexameric complexes that can associate with and also insert into pathogen membranes. Once inserted in bacteria membranes forms anion channels probably altering the transmembrane potential essential for bacterial survival. Highly effective against E.coli, E.faecalis, S.aureus and C.albicans. Optimal pH and salt concentration resemble the conditions in sweat. Also exhibits proteolytic activity, cleaving on the C-terminal side of Arg and, to a lesser extent, Lys residues. Its function is as follows. Promotes survival of neurons and displays phosphatase activity. It may bind IgG. The protein is Dermcidin of Homo sapiens (Human).